The chain runs to 109 residues: Nucleoid-associated protein Ping_2276 (109 aa).

It belongs to the YbaB/EbfC family. In terms of assembly, homodimer.

The protein localises to the cytoplasm. The protein resides in the nucleoid. In terms of biological role, binds to DNA and alters its conformation. May be involved in regulation of gene expression, nucleoid organization and DNA protection. The chain is Nucleoid-associated protein Ping_2276 from Psychromonas ingrahamii (strain DSM 17664 / CCUG 51855 / 37).